Here is a 750-residue protein sequence, read N- to C-terminus: Circadian input-output histidine kinase CikA (750 aa).

The segment at 1–173 (MLPAFSPIFR…QVIAQIRQSL (173 aa)) is N-terminal domain. Positions 174–333 (DLSEILNNAV…KNFLGQIGEH (160 aa)) are GAF domain. Residues 385–609 (NISHELRTPL…IFTTVIPQQN (225 aa)) enclose the Histidine kinase domain. At His388 the chain carries Phosphohistidine; by autocatalysis. The interval 604–750 (VIPQQNFPPT…VQSIQQEPLR (147 aa)) is psR domain, bind KaiB(fs). One can recognise a Response regulatory domain in the interval 631 to 745 (SVIVIEQDEE…LLLQRVQSIQ (115 aa)). Asp680 carries the post-translational modification 4-aspartylphosphate.

It in the N-terminal section; belongs to the phytochrome family. Homodimer. Part of the circadian clock (KaiA, KaiB, KaiC, CikA, RpaA, SasA), the composition of which varies during the circadian cycle. KaiA and CikA compete for binding to KaiB(fs). Interacts with RpaA.

It catalyses the reaction ATP + protein L-histidine = ADP + protein N-phospho-L-histidine.. Functions in an input pathway to the Kai circadian clock. Senses oxidized quinones via its C-terminal pseudo-receiver domain, providing a link between cell metabolism and the clock. Affects the ratio of phosphorylated to unphosphorylated KaiC, binds quinones via its pseudo-receptor domain. Quinone-binding destabilizes the protein rapidly. Autophosphorylates, does not transfer the phosphate to its pseudo-receiver (PsR) domain. May play a role in cell division. Functionally, also functions in a two-component CikA/RpaA output pathway from the circadian clock, negatively regulating kaiBC expression independently of labA and of sasA. One of three clock output pathways. Dephosphorylates phospho-RpaA, enhanced by KaiB and KaiC, has only modest kinase activity on RpaA. The sequence is that of Circadian input-output histidine kinase CikA from Synechocystis sp. (strain ATCC 27184 / PCC 6803 / Kazusa).